The following is a 658-amino-acid chain: NUAK family SNF1-like kinase 1 (658 aa).

Residue Met1 is modified to N-acetylmethionine. Residues 1–53 form a disordered region; it reads MEGAAVSAAGDGPAVETGLPGSPLEAVAGATAAPVEPRKPHGVKRHHHKHNLK. Ser22 carries the post-translational modification Phosphoserine. A compositionally biased stretch (basic residues) spans 40-53; the sequence is PHGVKRHHHKHNLK. One can recognise a Protein kinase domain in the interval 56–307; sequence YELQETLGKG…IEDIANHWWV (252 aa). ATP-binding positions include 62 to 70 and Lys85; that span reads LGKGTYGKV. The active-site Proton acceptor is the Asp179. Position 212 is a phosphothreonine; by LKB1 (Thr212). 2 disordered regions span residues 353–422 and 441–568; these read LAKP…EGIV and IPLP…SYSR. Positions 378–393 are enriched in polar residues; the sequence is FPQSGQDSVPESPSKL. Positions 394 to 405 are enriched in basic residues; the sequence is SSKRPKGILKKR. The GILK motif signature appears at 400-403; that stretch reads GILK. Ser456 carries the post-translational modification Phosphoserine. The segment covering 519–530 has biased composition (basic residues); the sequence is SCRRKGILKHSS. Low complexity predominate over residues 559-568; it reads SDGISRSYSR. Phosphoserine; by PKB/AKT1 is present on Ser601.

The protein belongs to the protein kinase superfamily. CAMK Ser/Thr protein kinase family. SNF1 subfamily. Interacts (via GILK motif) with PPP1CB; the interaction is direct and bridges NUAK1 and PPP1R12A. Interacts with CDKN1A. It depends on Mg(2+) as a cofactor. In terms of processing, phosphorylated at Thr-212 by STK11/LKB1 in complex with STE20-related adapter-alpha (STRADA) pseudo kinase and CAB39. Not dephosphorylated by the myosin PP1 complex when regulating its activity, due to the presence of PPP1R12A, which prevents myosin PP1 from dephosphorylating NUAK1. Phosphorylated by STK38L upon stimulation with IGF1. Post-translationally, ubiquitinated with 'Lys-29'- and 'Lys-33'-linked polyubiquitins which appear to impede LKB1-mediated phosphorylation. Deubiquitinated by USP9X. Expressed in the developing central nervous system, in epidermis, and some other tissues.

The protein localises to the nucleus. It is found in the cytoplasm. The catalysed reaction is L-seryl-[protein] + ATP = O-phospho-L-seryl-[protein] + ADP + H(+). It catalyses the reaction L-threonyl-[protein] + ATP = O-phospho-L-threonyl-[protein] + ADP + H(+). With respect to regulation, activated by phosphorylation on Thr-212. Activated by phosphorylation at Ser-601 AKT1 during glucose starvation; the relevance of such activation in normal cells is however unsure. Serine/threonine-protein kinase involved in various processes such as cell adhesion, regulation of cell ploidy and senescence, cell proliferation and tumor progression. Phosphorylates ATM, CASP6, LATS1, PPP1R12A and p53/TP53. Acts as a regulator of cellular senescence and cellular ploidy by mediating phosphorylation of 'Ser-464' of LATS1, thereby controlling its stability. Controls cell adhesion by regulating activity of the myosin protein phosphatase 1 (PP1) complex. Acts by mediating phosphorylation of PPP1R12A subunit of myosin PP1: phosphorylated PPP1R12A then interacts with 14-3-3, leading to reduced dephosphorylation of myosin MLC2 by myosin PP1. May be involved in DNA damage response: phosphorylates p53/TP53 at 'Ser-15' and 'Ser-392' and is recruited to the CDKN1A/WAF1 promoter to participate in transcription activation by p53/TP53. May also act as a tumor malignancy-associated factor by promoting tumor invasion and metastasis under regulation and phosphorylation by AKT1. Suppresses Fas-induced apoptosis by mediating phosphorylation of CASP6, thereby suppressing the activation of the caspase and the subsequent cleavage of CFLAR. Regulates UV radiation-induced DNA damage response mediated by CDKN1A. In association with STK11, phosphorylates CDKN1A in response to UV radiation and contributes to its degradation which is necessary for optimal DNA repair. The chain is NUAK family SNF1-like kinase 1 (Nuak1) from Mus musculus (Mouse).